Here is a 606-residue protein sequence, read N- to C-terminus: Ectonucleoside triphosphate diphosphohydrolase 7 (606 aa).

Residues 1 to 28 (MARISFSYLCPASWYFTVPTVSPFLRQR) are Cytoplasmic-facing. Residues 29–49 (VAFLGLFFIPCVLLLLLIMDL) form a helical membrane-spanning segment. The Vesicular segment spans residues 50–548 (RHWATSLPRD…PAHGSWLRLS (499 aa)). Glu-217 (proton acceptor) is an active-site residue. Asn-330 carries N-linked (GlcNAc...) asparagine glycosylation. A disulfide bridge links Cys-448 with Cys-477. A helical membrane pass occupies residues 549–569 (FVYNHYLFFACTLVVLLAIVL). Over 570–606 (YLLRIHRIHRRQTRASAPLDLLWIEQVVPMIGVQVGP) the chain is Cytoplasmic.

It belongs to the GDA1/CD39 NTPase family. The cofactor is Ca(2+). Mg(2+) is required as a cofactor. Widely expressed. Expressed at high level in brain, kidney, liver, testis and small intestin. Weakly expressed in lung, thymus and heart.

Its subcellular location is the cytoplasmic vesicle membrane. It carries out the reaction a ribonucleoside 5'-triphosphate + H2O = a ribonucleoside 5'-diphosphate + phosphate + H(+). It catalyses the reaction UTP + H2O = UDP + phosphate + H(+). The catalysed reaction is GTP + H2O = GDP + phosphate + H(+). The enzyme catalyses CTP + H2O = CDP + phosphate + H(+). It carries out the reaction ATP + H2O = ADP + phosphate + H(+). In terms of biological role, catalyzes the hydrolysis of nucleoside triphosphates and diphosphates in a calcium- or magnesium-dependent manner. Preferentially hydrolyzes nucleoside 5'-triphosphates, with substrate preference for UTP &gt; GTP &gt; CTP. Hydrolyzes nucleoside diphosphates only to a minor extent. In contrast to its human ortholog is able to hydrolyze ATP. In the epithelial cells of small intestine controls luminal ATP levels, therefore regulating Th17-cell development. This is Ectonucleoside triphosphate diphosphohydrolase 7 (Entpd7) from Mus musculus (Mouse).